Here is a 185-residue protein sequence, read N- to C-terminus: Elongation factor P (185 aa).

It belongs to the elongation factor P family.

Its subcellular location is the cytoplasm. It functions in the pathway protein biosynthesis; polypeptide chain elongation. Involved in peptide bond synthesis. Stimulates efficient translation and peptide-bond synthesis on native or reconstituted 70S ribosomes in vitro. Probably functions indirectly by altering the affinity of the ribosome for aminoacyl-tRNA, thus increasing their reactivity as acceptors for peptidyl transferase. The protein is Elongation factor P of Mesomycoplasma hyopneumoniae (strain 7448) (Mycoplasma hyopneumoniae).